The primary structure comprises 744 residues: Putative pre-mRNA-splicing factor ATP-dependent RNA helicase DHX32 (744 aa).

Met1 carries the N-acetylmethionine modification. The interval 1-28 (MDEEELDHPNASPEKRYFPESLDSSDGD) is disordered. Positions 72-270 (MESLLQNQVV…RLIFEIHRSG (199 aa)) constitute a Helicase ATP-binding domain. ATP is bound at residue 85-92 (GDSKCGKS). The DEAH box motif lies at 185–188 (DDVH). One can recognise a Helicase C-terminal domain in the interval 258-438 (SVIRLIFEIH…SMVLFMKRVD (181 aa)).

This sequence belongs to the DEAD box helicase family. DEAH subfamily.

The protein resides in the nucleus. It is found in the mitochondrion. The catalysed reaction is ATP + H2O = ADP + phosphate + H(+). The protein is Putative pre-mRNA-splicing factor ATP-dependent RNA helicase DHX32 (Dhx32) of Mus musculus (Mouse).